A 154-amino-acid chain; its full sequence is Transcriptional repressor NrdR (154 aa).

The segment at 3–34 (CPFCRHSDSRVIDSRETDEGQAIRRRRSCPEC) is a zinc-finger region. An ATP-cone domain is found at 46 to 136 (VAVVKRSGVT…VYRSFSSADD (91 aa)).

This sequence belongs to the NrdR family. Zn(2+) is required as a cofactor.

In terms of biological role, negatively regulates transcription of bacterial ribonucleotide reductase nrd genes and operons by binding to NrdR-boxes. The polypeptide is Transcriptional repressor NrdR (Mycobacterium leprae (strain Br4923)).